We begin with the raw amino-acid sequence, 805 residues long: Zinc finger CCCH domain-containing protein 11B (805 aa).

C3H1-type zinc fingers lie at residues proline 2–alanine 29 and leucine 31–isoleucine 57. 6 disordered regions span residues lysine 140–valine 194, lysine 223–asparagine 351, methionine 364–lysine 433, isoleucine 449–glutamate 468, lysine 481–arginine 506, and valine 715–leucine 805. The span at alanine 160–aspartate 175 shows a compositional bias: acidic residues. Residues methionine 364 to aspartate 390 are compositionally biased toward basic and acidic residues. Over residues serine 391–arginine 402 the composition is skewed to polar residues. The stretch at isoleucine 403–glutamine 423 forms a coiled coil. Basic and acidic residues-rich tracts occupy residues glutamate 412–lysine 433 and glutamine 455–glutamate 468. 2 stretches are compositionally biased toward low complexity: residues glutamine 486 to glutamine 498 and proline 730 to serine 749. Positions glutamine 750–threonine 763 are enriched in polar residues. Residues glutamate 789–leucine 805 are compositionally biased toward acidic residues.

May play a role in mRNA transport. This Homo sapiens (Human) protein is Zinc finger CCCH domain-containing protein 11B.